Reading from the N-terminus, the 345-residue chain is Fibronectin type 3 and ankyrin repeat domains protein 1 (345 aa).

The Fibronectin type-III domain occupies 8–108 (PPSKPHPPVV…LVSVSTTREP (101 aa)). 6 ANK repeats span residues 109 to 139 (ISSEHLHRAVSVNDEDLLVRILQGGRVKVDV), 143 to 172 (FGFTALMVAAQKGYTRLVKILVSNGTDVNL), 176 to 205 (SGKDSLMLACYAGHLDVVKYLRRHGASWQA), 209 to 238 (GGCTALHWAADGGHCSVIEWMIKDGCEVDV), 243 to 273 (SGWTPLMRVSAVSGNQRVASLLIDAGANVNV), and 277 to 306 (NGKTPLMVAVLNNHEELVQLLLDKGADASV).

As to quaternary structure, interacts with COPS5; regulates the phosphorylation of JUN and the transcriptional activity of AP-1. Interacts with RYBP; may prevent the ubiquitin-mediated proteasomal degradation of FANK1. Polyubiquitinated. Polyubiquitination leads to proteasomal degradation. As to expression, mostly restricted to testis.

It localises to the nucleus. The protein resides in the cytoplasm. The protein localises to the cytosol. It is found in the cytoskeleton. Its subcellular location is the cilium basal body. It localises to the cell projection. The protein resides in the cilium. Its function is as follows. Through the activation of JUN and AP-1-mediated transcription, may regulate apoptosis. The protein is Fibronectin type 3 and ankyrin repeat domains protein 1 of Homo sapiens (Human).